We begin with the raw amino-acid sequence, 452 residues long: Probable dihydrolipoyllysine-residue succinyltransferase component of 2-oxoglutarate dehydrogenase complex, mitochondrial (452 aa).

Positions 42 to 117 (STRIKTPPFP…TIDQDIAVID (76 aa)) constitute a Lipoyl-binding domain. The residue at position 83 (Lys-83) is an N6-lipoyllysine. Positions 119–225 (SAAPPEGGSA…FSRNEDRVKM (107 aa)) are disordered. 3 stretches are compositionally biased toward basic and acidic residues: residues 130 to 144 (PKKD…DAAK), 154 to 170 (KPIE…EQKE), and 195 to 209 (AKSE…KATE). Catalysis depends on residues His-424 and Asp-428.

Belongs to the 2-oxoacid dehydrogenase family. It depends on (R)-lipoate as a cofactor.

It localises to the mitochondrion. The catalysed reaction is N(6)-[(R)-dihydrolipoyl]-L-lysyl-[protein] + succinyl-CoA = N(6)-[(R)-S(8)-succinyldihydrolipoyl]-L-lysyl-[protein] + CoA. It participates in amino-acid degradation; L-lysine degradation via saccharopine pathway; glutaryl-CoA from L-lysine: step 6/6. In terms of biological role, the 2-oxoglutarate dehydrogenase complex catalyzes the overall conversion of 2-oxoglutarate to succinyl-CoA and CO(2). It contains multiple copies of three enzymatic components: 2-oxoglutarate dehydrogenase (E1), dihydrolipoamide succinyltransferase (E2) and lipoamide dehydrogenase (E3). The polypeptide is Probable dihydrolipoyllysine-residue succinyltransferase component of 2-oxoglutarate dehydrogenase complex, mitochondrial (kgd2) (Schizosaccharomyces pombe (strain 972 / ATCC 24843) (Fission yeast)).